Reading from the N-terminus, the 317-residue chain is Ornithine carbamoyltransferase (317 aa).

Carbamoyl phosphate-binding positions include 57–60, Gln-84, Arg-108, and 135–138; these read STRT and HPCQ. L-ornithine is bound by residues Asn-166, Asp-230, and 234-235; that span reads SM. Residues 270-271 and Arg-298 contribute to the carbamoyl phosphate site; that span reads CL.

It belongs to the aspartate/ornithine carbamoyltransferase superfamily. OTCase family. In terms of assembly, homododecamer.

The protein resides in the cytoplasm. It carries out the reaction carbamoyl phosphate + L-ornithine = L-citrulline + phosphate + H(+). Its pathway is amino-acid biosynthesis; L-arginine biosynthesis; L-arginine from L-ornithine and carbamoyl phosphate: step 1/3. In terms of biological role, reversibly catalyzes the transfer of the carbamoyl group from carbamoyl phosphate (CP) to the N(epsilon) atom of ornithine (ORN) to produce L-citrulline. This Pyrococcus horikoshii (strain ATCC 700860 / DSM 12428 / JCM 9974 / NBRC 100139 / OT-3) protein is Ornithine carbamoyltransferase.